Consider the following 309-residue polypeptide: Epidermal retinol dehydrogenase 2 (309 aa).

Residues 11–31 (LFIFLGKSLFSLLEAMIFALL) form a helical membrane-spanning segment. 44–68 (LITGAGSGLGRLLALQFARLGSVLV) is a binding site for NADP(+). S177 serves as a coordination point for substrate. Catalysis depends on Y190, which acts as the Proton acceptor. The helical transmembrane segment at 270 to 290 (LLYFMMFLKSFLPLKTGLLIA) threads the bilayer.

The protein belongs to the short-chain dehydrogenases/reductases (SDR) family. Detected in adult lung. Detected at low levels in adult brain, heart, testis, placenta, cervix, pancreas, uterus, stomach, rectum, small intestine, colon, esophagus, thymus, skin, and skin keratinocyte. Expression is higher in psoriasis lesions relative to unaffected skin from psoriasis patients. Detected in fetal kidney, skin and lung.

It localises to the endoplasmic reticulum membrane. The catalysed reaction is all-trans-retinol--[retinol-binding protein] + NAD(+) = all-trans-retinal--[retinol-binding protein] + NADH + H(+). It functions in the pathway cofactor metabolism; retinol metabolism. Oxidoreductase with strong preference for NAD. Active in both the oxidative and reductive directions. Oxidizes all-trans-retinol in all-trans-retinaldehyde. No activity was detected with 11-cis-retinol or 11-cis-retinaldehyde as substrates with either NAD(+)/NADH or NADP(+)/NADPH. This chain is Epidermal retinol dehydrogenase 2, found in Homo sapiens (Human).